A 115-amino-acid polypeptide reads, in one-letter code: Probable 4-amino-4-deoxy-L-arabinose-phosphoundecaprenol flippase subunit ArnE (115 aa).

3 helical membrane passes run 42–62, 65–85, and 93–112; these read PWPWLALLALGLGLLCWLLLL, VEVGSAYPMLALNFVLVTLAA, and VDRRHLAGLLLIVAGVVLLG. The 68-residue stretch at 46–113 folds into the EamA domain; that stretch reads LALLALGLGL…IVAGVVLLGR (68 aa).

It belongs to the ArnE family. Heterodimer of ArnE and ArnF.

It localises to the cell inner membrane. Its pathway is bacterial outer membrane biogenesis; lipopolysaccharide biosynthesis. Functionally, translocates 4-amino-4-deoxy-L-arabinose-phosphoundecaprenol (alpha-L-Ara4N-phosphoundecaprenol) from the cytoplasmic to the periplasmic side of the inner membrane. The sequence is that of Probable 4-amino-4-deoxy-L-arabinose-phosphoundecaprenol flippase subunit ArnE from Pseudomonas aeruginosa (strain UCBPP-PA14).